The following is a 216-amino-acid chain: Protein-L-isoaspartate O-methyltransferase (216 aa).

Serine 61 is an active-site residue.

The protein belongs to the methyltransferase superfamily. L-isoaspartyl/D-aspartyl protein methyltransferase family.

The protein resides in the cytoplasm. It carries out the reaction [protein]-L-isoaspartate + S-adenosyl-L-methionine = [protein]-L-isoaspartate alpha-methyl ester + S-adenosyl-L-homocysteine. Functionally, catalyzes the methyl esterification of L-isoaspartyl residues in peptides and proteins that result from spontaneous decomposition of normal L-aspartyl and L-asparaginyl residues. It plays a role in the repair and/or degradation of damaged proteins. This Pyrococcus abyssi (strain GE5 / Orsay) protein is Protein-L-isoaspartate O-methyltransferase (pcm).